The primary structure comprises 463 residues: Putative F-box protein At3g29830 (463 aa).

One can recognise an F-box domain in the interval 7–55; sequence RDRISSLPDVVLVMILSFLSFKDNVKTSILSKRWRNICYEAKNISFKES.

This Arabidopsis thaliana (Mouse-ear cress) protein is Putative F-box protein At3g29830.